A 667-amino-acid chain; its full sequence is mRNA cap guanine-N(7) methyltransferase (667 aa).

Over residues 1-19 the composition is skewed to basic and acidic residues; the sequence is MYDPARDSWEERDGDEARS. Positions 1-272 are disordered; the sequence is MYDPARDSWE…RRRQEERERA (272 aa). Positions 33–52 are enriched in polar residues; it reads FSSSEQIYGASGENNNTTDL. Low complexity predominate over residues 72–87; that stretch reads SPPAQSTTQTPPSIST. A compositionally biased stretch (polar residues) spans 88 to 128; the sequence is HVQSPVNPAAQEASNTQSLTSAAQNQSNKSTTTMDNTSGSA. Positions 132 to 142 are enriched in basic and acidic residues; it reads PRADPSDKSNR. The span at 147–156 shows a compositional bias: polar residues; that stretch reads ASPTDQNGSQ. The span at 256–272 shows a compositional bias: basic and acidic residues; it reads LVDRETLRRRQEERERA. Positions 309–667 constitute an mRNA cap 0 methyltransferase domain; it reads SKIKGLRSFN…FYHAFCFYKV (359 aa). An mRNA-binding site is contributed by 318–319; it reads NN. Residues Lys-322, Gly-365, Asp-389, Asp-427, 470–472, and Tyr-475 contribute to the S-adenosyl-L-methionine site; that span reads MFT. Residues 521–535 are compositionally biased toward basic and acidic residues; sequence KKERQSQAKKEKTDE. Positions 521–547 are disordered; sequence KKERQSQAKKEKTDEAPEDGEVEEDDG. Acidic residues predominate over residues 536–547; the sequence is APEDGEVEEDDG.

The protein belongs to the class I-like SAM-binding methyltransferase superfamily. mRNA cap 0 methyltransferase family.

It localises to the nucleus. It catalyses the reaction a 5'-end (5'-triphosphoguanosine)-ribonucleoside in mRNA + S-adenosyl-L-methionine = a 5'-end (N(7)-methyl 5'-triphosphoguanosine)-ribonucleoside in mRNA + S-adenosyl-L-homocysteine. Its function is as follows. Responsible for methylating the 5'-cap structure of mRNAs. This chain is mRNA cap guanine-N(7) methyltransferase (abd1), found in Neosartorya fischeri (strain ATCC 1020 / DSM 3700 / CBS 544.65 / FGSC A1164 / JCM 1740 / NRRL 181 / WB 181) (Aspergillus fischerianus).